Reading from the N-terminus, the 639-residue chain is Protein artemis (639 aa).

3 disordered regions span residues 450–496 (MDCT…LTSS), 515–570 (SELE…SQVD), and 590–617 (EAAE…VPQP). Over residues 454 to 466 (ESNDDDDDEDDAA) the composition is skewed to acidic residues. A compositionally biased stretch (polar residues) spans 518–537 (ENSQNTQTLSTENTASQSPE). A compositionally biased stretch (low complexity) spans 548 to 560 (VHMSSSQSTHISD).

The protein belongs to the DNA repair metallo-beta-lactamase (DRMBL) family.

Its subcellular location is the nucleus. Functionally, may have a role in the processing of DNA double strand breaks (DSBs) prior to their repair by the non homologous end joining (NHEJ) pathway. Probably exhibits both exonuclease and endonuclease activity. The polypeptide is Protein artemis (dclre1c) (Danio rerio (Zebrafish)).